The sequence spans 550 residues: Cytochrome P450 monooxygenase FFUJ_09176 (550 aa).

An N-terminal signal peptide occupies residues 1–31 (MLQTIPMPSRELTIALAVLSLLMVLVQRAGS). Residues 430 to 441 (FIPERFEGDTRS) show a composition bias toward basic and acidic residues. The disordered stretch occupies residues 430–451 (FIPERFEGDTRSSQESAASPDV). Cysteine 466 provides a ligand contact to heme.

It belongs to the cytochrome P450 family.

In terms of biological role, cytochrome P450 monooxygenase; part of the DMATS1 gene cluster that mediates the biosynthesis of a reversely N-prenylated monomeric L-tryptophan (r-N-DMAT). Seems not to contribute to the final DMATS1 product. This is Cytochrome P450 monooxygenase FFUJ_09176 from Gibberella fujikuroi (strain CBS 195.34 / IMI 58289 / NRRL A-6831) (Bakanae and foot rot disease fungus).